Here is a 480-residue protein sequence, read N- to C-terminus: Ribulose bisphosphate carboxylase large chain (480 aa).

The propeptide occupies 1–2 (MS). N-acetylproline is present on P3. K14 is subject to N6,N6,N6-trimethyllysine. Residues N123 and T173 each contribute to the substrate site. K175 functions as the Proton acceptor in the catalytic mechanism. K177 is a substrate binding site. Residues K201, D203, and E204 each coordinate Mg(2+). K201 carries the N6-carboxylysine modification. H294 (proton acceptor) is an active-site residue. R295, H327, and S379 together coordinate substrate.

Belongs to the RuBisCO large chain family. Type I subfamily. As to quaternary structure, heterohexadecamer of 8 large chains and 8 small chains; disulfide-linked. The disulfide link is formed within the large subunit homodimers. Mg(2+) serves as cofactor. The disulfide bond which can form in the large chain dimeric partners within the hexadecamer appears to be associated with oxidative stress and protein turnover.

Its subcellular location is the plastid. It localises to the chloroplast. It catalyses the reaction 2 (2R)-3-phosphoglycerate + 2 H(+) = D-ribulose 1,5-bisphosphate + CO2 + H2O. The enzyme catalyses D-ribulose 1,5-bisphosphate + O2 = 2-phosphoglycolate + (2R)-3-phosphoglycerate + 2 H(+). Its function is as follows. RuBisCO catalyzes two reactions: the carboxylation of D-ribulose 1,5-bisphosphate, the primary event in carbon dioxide fixation, as well as the oxidative fragmentation of the pentose substrate in the photorespiration process. Both reactions occur simultaneously and in competition at the same active site. The sequence is that of Ribulose bisphosphate carboxylase large chain from Gossypium barbadense (Sea Island cotton).